The primary structure comprises 226 residues: Phosphatidylserine decarboxylase proenzyme (226 aa).

Residue Ser184 is the Schiff-base intermediate with substrate; via pyruvic acid of the active site. Pyruvic acid (Ser); by autocatalysis is present on Ser184.

Belongs to the phosphatidylserine decarboxylase family. PSD-A subfamily. In terms of assembly, heterodimer of a large membrane-associated beta subunit and a small pyruvoyl-containing alpha subunit. It depends on pyruvate as a cofactor. In terms of processing, is synthesized initially as an inactive proenzyme. Formation of the active enzyme involves a self-maturation process in which the active site pyruvoyl group is generated from an internal serine residue via an autocatalytic post-translational modification. Two non-identical subunits are generated from the proenzyme in this reaction, and the pyruvate is formed at the N-terminus of the alpha chain, which is derived from the carboxyl end of the proenzyme. The post-translation cleavage follows an unusual pathway, termed non-hydrolytic serinolysis, in which the side chain hydroxyl group of the serine supplies its oxygen atom to form the C-terminus of the beta chain, while the remainder of the serine residue undergoes an oxidative deamination to produce ammonia and the pyruvoyl prosthetic group on the alpha chain.

The protein resides in the cell membrane. It carries out the reaction a 1,2-diacyl-sn-glycero-3-phospho-L-serine + H(+) = a 1,2-diacyl-sn-glycero-3-phosphoethanolamine + CO2. The protein operates within phospholipid metabolism; phosphatidylethanolamine biosynthesis; phosphatidylethanolamine from CDP-diacylglycerol: step 2/2. Functionally, catalyzes the formation of phosphatidylethanolamine (PtdEtn) from phosphatidylserine (PtdSer). The protein is Phosphatidylserine decarboxylase proenzyme of Ehrlichia chaffeensis (strain ATCC CRL-10679 / Arkansas).